The chain runs to 149 residues: FAD synthase (149 aa).

ATP is bound by residues 9–10 (VF), 14–17 (HPGH), aspartate 93, and tyrosine 120.

Belongs to the archaeal FAD synthase family. As to quaternary structure, homodimer. A divalent metal cation serves as cofactor.

The catalysed reaction is FMN + ATP + H(+) = FAD + diphosphate. It functions in the pathway cofactor biosynthesis; FAD biosynthesis; FAD from FMN: step 1/1. In terms of biological role, catalyzes the transfer of the AMP portion of ATP to flavin mononucleotide (FMN) to produce flavin adenine dinucleotide (FAD) coenzyme. The polypeptide is FAD synthase (Aciduliprofundum boonei (strain DSM 19572 / T469)).